A 377-amino-acid chain; its full sequence is T-protein (377 aa).

One can recognise a Chorismate mutase domain in the interval 1 to 92 (MSFMEALKDL…ESYANENQFG (92 aa)). The 264-residue stretch at 101–364 (HKIVIVGGYG…DYSEQFLKES (264 aa)) folds into the Prephenate/arogenate dehydrogenase domain.

The protein in the C-terminal section; belongs to the prephenate/arogenate dehydrogenase family.

It is found in the cytoplasm. The catalysed reaction is chorismate = prephenate. It carries out the reaction prephenate + NAD(+) = 3-(4-hydroxyphenyl)pyruvate + CO2 + NADH. The protein operates within amino-acid biosynthesis; L-tyrosine biosynthesis; (4-hydroxyphenyl)pyruvate from prephenate (NAD(+) route): step 1/1. Its pathway is metabolic intermediate biosynthesis; prephenate biosynthesis; prephenate from chorismate: step 1/1. This chain is T-protein (tyrA), found in Haemophilus influenzae (strain ATCC 51907 / DSM 11121 / KW20 / Rd).